The primary structure comprises 122 residues: Probable DNA-directed RNA polymerase II subunit RPB11 (122 aa).

The protein belongs to the archaeal Rpo11/eukaryotic RPB11/RPC19 RNA polymerase subunit family. In terms of assembly, component of the RNA polymerase II (Pol II) complex consisting of 12 subunits.

The protein resides in the nucleus. DNA-dependent RNA polymerase catalyzes the transcription of DNA into RNA using the four ribonucleoside triphosphates as substrates. Component of RNA polymerase II which synthesizes mRNA precursors and many functional non-coding RNAs. Pol II is the central component of the basal RNA polymerase II transcription machinery. It is composed of mobile elements that move relative to each other. RPB11 is part of the core element with the central large cleft. This is Probable DNA-directed RNA polymerase II subunit RPB11 (rpb-11) from Caenorhabditis briggsae.